The sequence spans 144 residues: Granulocyte-macrophage colony-stimulating factor (144 aa).

Positions 1–17 are cleaved as a signal peptide; it reads MWLQNLLFLGTVVCSIS. An O-linked (GalNAc...) serine glycan is attached at Ser-22. An O-linked (GalNAc...) threonine glycan is attached at Thr-27. Asn-44 carries N-linked (GlcNAc...) asparagine glycosylation. Cystine bridges form between Cys-71-Cys-113 and Cys-105-Cys-138.

This sequence belongs to the GM-CSF family. Monomer. The signaling GM-CSF receptor complex is a dodecamer of two head-to-head hexamers of two alpha, two beta, and two ligand subunits.

The protein resides in the secreted. Cytokine that stimulates the growth and differentiation of hematopoietic precursor cells from various lineages, including granulocytes, macrophages, eosinophils and erythrocytes. The protein is Granulocyte-macrophage colony-stimulating factor (CSF2) of Canis lupus familiaris (Dog).